A 157-amino-acid chain; its full sequence is Protein-export protein SecB (157 aa).

This sequence belongs to the SecB family. In terms of assembly, homotetramer, a dimer of dimers. One homotetramer interacts with 1 SecA dimer.

The protein resides in the cytoplasm. Functionally, one of the proteins required for the normal export of preproteins out of the cell cytoplasm. It is a molecular chaperone that binds to a subset of precursor proteins, maintaining them in a translocation-competent state. It also specifically binds to its receptor SecA. The chain is Protein-export protein SecB from Proteus mirabilis (strain HI4320).